Consider the following 390-residue polypeptide: Lipid-A-disaccharide synthase (390 aa).

This sequence belongs to the LpxB family.

The catalysed reaction is a lipid X + a UDP-2-N,3-O-bis[(3R)-3-hydroxyacyl]-alpha-D-glucosamine = a lipid A disaccharide + UDP + H(+). The protein operates within bacterial outer membrane biogenesis; LPS lipid A biosynthesis. Functionally, condensation of UDP-2,3-diacylglucosamine and 2,3-diacylglucosamine-1-phosphate to form lipid A disaccharide, a precursor of lipid A, a phosphorylated glycolipid that anchors the lipopolysaccharide to the outer membrane of the cell. The polypeptide is Lipid-A-disaccharide synthase (Haemophilus influenzae (strain PittEE)).